The chain runs to 230 residues: Thymidylate kinase (230 aa).

20 to 27 provides a ligand contact to ATP; sequence GGEGAGKS.

Belongs to the thymidylate kinase family.

The enzyme catalyses dTMP + ATP = dTDP + ADP. In terms of biological role, phosphorylation of dTMP to form dTDP in both de novo and salvage pathways of dTTP synthesis. The chain is Thymidylate kinase from Rhodopseudomonas palustris (strain TIE-1).